Here is a 663-residue protein sequence, read N- to C-terminus: GPI mannosyltransferase 3 (663 aa).

Basic residues predominate over residues 1–11 (MPMSARSRRSN). The segment at 1-44 (MPMSARSRRSNPRLPPSPSSSSSSDAVRASPHSSPPSRLRPPSA) is disordered. A compositionally biased stretch (low complexity) spans 19 to 42 (SSSSSSDAVRASPHSSPPSRLRPP). A run of 8 helical transmembrane segments spans residues 47–67 (DVSS…ALTV), 110–130 (PLIF…LGLT), 137–157 (LLIA…DFYT), 226–246 (VLAV…FPPL), 269–289 (YASQ…LVGL), 304–324 (GSIL…LSVI), 335–355 (LLPA…IPAL), and 367–387 (LTLI…TLFH). The interval 492 to 512 (HIPRRPSYATPPSSQRQPTQL) is disordered. The span at 501–511 (TPPSSQRQPTQ) shows a compositional bias: polar residues.

Belongs to the glycosyltransferase 22 family. PIGB subfamily.

It is found in the endoplasmic reticulum membrane. Its pathway is glycolipid biosynthesis; glycosylphosphatidylinositol-anchor biosynthesis. In terms of biological role, mannosyltransferase involved in glycosylphosphatidylinositol-anchor biosynthesis. Transfers the third mannose to Man2-GlcN-acyl-PI during GPI precursor assembly. The sequence is that of GPI mannosyltransferase 3 (gpi10) from Emericella nidulans (strain FGSC A4 / ATCC 38163 / CBS 112.46 / NRRL 194 / M139) (Aspergillus nidulans).